The primary structure comprises 347 residues: Large ribosomal subunit protein uL3 (347 aa).

This sequence belongs to the universal ribosomal protein uL3 family. As to quaternary structure, part of the 50S ribosomal subunit. Forms a cluster with proteins L14 and L24e.

In terms of biological role, one of the primary rRNA binding proteins, it binds directly near the 3'-end of the 23S rRNA, where it nucleates assembly of the 50S subunit. This is Large ribosomal subunit protein uL3 from Caldivirga maquilingensis (strain ATCC 700844 / DSM 13496 / JCM 10307 / IC-167).